An 84-amino-acid polypeptide reads, in one-letter code: MSGGSTGERPFSDIITSIRYWVIHSITIPSLFVAGWLFVSTGLAYDVFGTPRPNEYFTQDRQQVPLVNDRFSAKQELEDLTKGI.

A helical transmembrane segment spans residues 22-36 (VIHSITIPSLFVAGW). Histidine 24 is a binding site for heme.

It belongs to the PsbE/PsbF family. Heterodimer of an alpha subunit and a beta subunit. PSII is composed of 1 copy each of membrane proteins PsbA, PsbB, PsbC, PsbD, PsbE, PsbF, PsbH, PsbI, PsbJ, PsbK, PsbL, PsbM, PsbT, PsbX, PsbY, PsbZ, Psb30/Ycf12, at least 3 peripheral proteins of the oxygen-evolving complex and a large number of cofactors. It forms dimeric complexes. It depends on heme b as a cofactor.

Its subcellular location is the plastid. The protein resides in the chloroplast thylakoid membrane. Its function is as follows. This b-type cytochrome is tightly associated with the reaction center of photosystem II (PSII). PSII is a light-driven water:plastoquinone oxidoreductase that uses light energy to abstract electrons from H(2)O, generating O(2) and a proton gradient subsequently used for ATP formation. It consists of a core antenna complex that captures photons, and an electron transfer chain that converts photonic excitation into a charge separation. This Gracilaria tenuistipitata var. liui (Red alga) protein is Cytochrome b559 subunit alpha.